The sequence spans 576 residues: Carboxypeptidase S (576 aa).

At 1-19 (MIALPVEKAPRKSLWQRHR) the chain is on the cytoplasmic side. A Glycyl lysine isopeptide (Lys-Gly) (interchain with G-Cter in ubiquitin) cross-link involves residue lysine 8. Residues 20–40 (AFISGIVALIIIGTFFLTSGL) form a helical membrane-spanning segment. Residues 41 to 576 (HPAPPHEAKR…EYIVNVNEYA (536 aa)) are Lumenal-facing. Residues 44–65 (PPHEAKRPHHGKGPMHSPKCEK) are disordered. An N-linked (GlcNAc...) asparagine glycan is attached at asparagine 88. Histidine 168 provides a ligand contact to Zn(2+). Residue aspartate 170 is part of the active site. The N-linked (GlcNAc...) asparagine glycan is linked to asparagine 176. Residue aspartate 205 participates in Zn(2+) binding. Asparagine 228 is a glycosylation site (N-linked (GlcNAc...) asparagine). Catalysis depends on glutamate 239, which acts as the Proton acceptor. Residues glutamate 240 and aspartate 268 each coordinate Zn(2+). N-linked (GlcNAc...) asparagine glycosylation is found at asparagine 381 and asparagine 525. Zn(2+) is bound at residue histidine 547.

This sequence belongs to the peptidase M20A family. As to quaternary structure, yscS is synthesized as one polypeptide chain precursor which after carbohydrate modification in the secretory pathway yields two active precursor molecules. The proteolytically unprocessed forms are associated with the membrane, whereas the mature forms of the enzyme are soluble. Requires Zn(2+) as cofactor. In terms of processing, glycosylated. Post-translationally, ubiquitinated. Ubiquitination mediates sorting into internal vesicles in late endosomes. TUL1 is required for ubiquitination.

The protein resides in the vacuole membrane. The catalysed reaction is Release of a C-terminal amino acid from a peptide in which glycine is the penultimate amino acid, e.g. Z-Gly-|-Leu.. Necessary for use of certain peptides as sole nitrogen source. May also cleave intracellularly generated peptides to recycle amino acids for protein synthesis. This Saccharomyces cerevisiae (strain ATCC 204508 / S288c) (Baker's yeast) protein is Carboxypeptidase S (CPS1).